Reading from the N-terminus, the 532-residue chain is Spore germination protein 270-11 (532 aa).

Disordered regions lie at residues 113–225 and 328–436; these read TTTS…GYGS and LSPT…TTGT. The segment covering 329–426 has biased composition (low complexity); sequence SPTCSDSSSP…GSGSSSETQP (98 aa). 13 consecutive repeat copies span residues 339–342, 343–346, 347–350, 351–354, 355–358, 359–362, 363–366, 367–370, 371–374, 375–378, 397–400, 401–404, and 405–408. The 10 X 4 AA tandem repeats of T-[EP]-T-[EP] stretch occupies residues 339 to 378; that stretch reads TPTPTETPTETPTETPTETPTETPTETPTETPTETETPTP. Residues 397–408 form a 3 X 4 AA tandem repeats of T-[EP]-T-[PD] region; the sequence is TPTPTETDTPTP.

This chain is Spore germination protein 270-11 (celB), found in Dictyostelium discoideum (Social amoeba).